We begin with the raw amino-acid sequence, 256 residues long: Protein YIPF5 (256 aa).

Residues 1–125 lie on the Cytoplasmic side of the membrane; sequence MSNFDNFNTD…ADGSIMNETD (125 aa). The chain crosses the membrane as a helical span at residues 126–146; the sequence is LAGPMVFCLAFGATLLLAGKI. Position 147 (Gln147) is a topological domain, lumenal. A helical transmembrane segment spans residues 148–168; the sequence is FGYVYGISAMGCLGMYCLLNL. Residues 169-172 lie on the Cytoplasmic side of the membrane; that stretch reads MSMT. Residues 173-193 traverse the membrane as a helical segment; it reads GVSFGCVSSVLGYCLLPMIIL. Topologically, residues 194-195 are lumenal; the sequence is ST. A helical membrane pass occupies residues 196-216; the sequence is FAVIFSLQGILGIVLAALIIG. Over 217 to 235 the chain is Cytoplasmic; it reads WCSFSASKIFISALAMDGQ. The helical transmembrane segment at 236-256 threads the bilayer; it reads QLLVAYPCALLYGVFALISVF.

Belongs to the YIP1 family.

It localises to the endoplasmic reticulum membrane. The protein resides in the golgi apparatus. Its subcellular location is the cis-Golgi network membrane. Its function is as follows. Plays a role in transport between endoplasmic reticulum and Golgi. This is Protein YIPF5 (yipf5) from Xenopus laevis (African clawed frog).